The sequence spans 217 residues: tRNA (guanine-N(7)-)-methyltransferase (217 aa).

4 residues coordinate S-adenosyl-L-methionine: E56, E81, D108, and D130. D130 is a catalytic residue. K134 and D166 together coordinate substrate.

Belongs to the class I-like SAM-binding methyltransferase superfamily. TrmB family.

The enzyme catalyses guanosine(46) in tRNA + S-adenosyl-L-methionine = N(7)-methylguanosine(46) in tRNA + S-adenosyl-L-homocysteine. It participates in tRNA modification; N(7)-methylguanine-tRNA biosynthesis. In terms of biological role, catalyzes the formation of N(7)-methylguanine at position 46 (m7G46) in tRNA. The sequence is that of tRNA (guanine-N(7)-)-methyltransferase from Neorickettsia sennetsu (strain ATCC VR-367 / Miyayama) (Ehrlichia sennetsu).